The sequence spans 148 residues: MMSATSLLVMNGPNLSRLGKREPEVYGSLTLDEINRGIAVAFPEVSFEFFQSEHEGALIEKLFEIEGRGGFSGVVLNAGALTHYSIALRDAISAVTMPVVEVHLSNVHKREEFRHKSVISAVCIGVIAGFGVESYHLGVRALLGRGNR.

Y26 (proton acceptor) is an active-site residue. The substrate site is built by N77, H83, and D90. H103 (proton donor) is an active-site residue. Substrate contacts are provided by residues 104–105 (LS) and R114.

This sequence belongs to the type-II 3-dehydroquinase family. Homododecamer.

The catalysed reaction is 3-dehydroquinate = 3-dehydroshikimate + H2O. The protein operates within metabolic intermediate biosynthesis; chorismate biosynthesis; chorismate from D-erythrose 4-phosphate and phosphoenolpyruvate: step 3/7. In terms of biological role, catalyzes a trans-dehydration via an enolate intermediate. This is 3-dehydroquinate dehydratase from Chlorobaculum tepidum (strain ATCC 49652 / DSM 12025 / NBRC 103806 / TLS) (Chlorobium tepidum).